Reading from the N-terminus, the 235-residue chain is Keratin-associated protein 4-16 (235 aa).

The 16 X 5 AA repeats of C-C-[GIKRQVHEML]-[SPTRV]-[STVQRCP] stretch occupies residues 1 to 132; the sequence is MCSSKMPCSP…CCCPCCCLRP (132 aa). Tandem repeats lie at residues 23–27, 28–32, 33–37, 48–52, 53–57, 58–62, 63–67, 68–72, 78–82, 83–87, 88–92, 93–97, 103–107, 108–112, 118–122, and 128–132. Over residues 203-224 the composition is skewed to pro residues; the sequence is SPSPSLPSLSPPLPSPPLPSPH. A disordered region spans residues 203-235; sequence SPSPSLPSLSPPLPSPPLPSPHFPSVNPKSMLQ.

It belongs to the KRTAP type 4 family. Interacts with hair keratins.

In the hair cortex, hair keratin intermediate filaments are embedded in an interfilamentous matrix, consisting of hair keratin-associated proteins (KRTAP), which are essential for the formation of a rigid and resistant hair shaft through their extensive disulfide bond cross-linking with abundant cysteine residues of hair keratins. The matrix proteins include the high-sulfur and high-glycine-tyrosine keratins. The polypeptide is Keratin-associated protein 4-16 (Homo sapiens (Human)).